The following is a 275-amino-acid chain: NH(3)-dependent NAD(+) synthetase (275 aa).

Position 50 to 57 (50 to 57 (GISGGVDS)) interacts with ATP. Asp-56 is a Mg(2+) binding site. Position 147 (Arg-147) interacts with deamido-NAD(+). Thr-167 is an ATP binding site. Glu-172 provides a ligand contact to Mg(2+). The deamido-NAD(+) site is built by Lys-180 and Asp-187. Positions 196 and 218 each coordinate ATP. 267–268 (HK) is a deamido-NAD(+) binding site.

The protein belongs to the NAD synthetase family. In terms of assembly, homodimer.

It catalyses the reaction deamido-NAD(+) + NH4(+) + ATP = AMP + diphosphate + NAD(+) + H(+). It functions in the pathway cofactor biosynthesis; NAD(+) biosynthesis; NAD(+) from deamido-NAD(+) (ammonia route): step 1/1. Catalyzes the ATP-dependent amidation of deamido-NAD to form NAD. Uses ammonia as a nitrogen source. The protein is NH(3)-dependent NAD(+) synthetase of Stutzerimonas stutzeri (strain A1501) (Pseudomonas stutzeri).